A 1143-amino-acid polypeptide reads, in one-letter code: Probable ATP-dependent RNA helicase DHX34 (1143 aa).

Disordered stretches follow at residues 1–24 (MPPP…EEEA) and 75–94 (TSRK…PALA). The span at 76-85 (SRKEEKDPGQ) shows a compositional bias: basic and acidic residues. Residues 172-332 (LQTLKEHQVV…FSNAPVVQVP (161 aa)) form the Helicase ATP-binding domain. Residue 185–192 (GDTGCGKS) coordinates ATP. Positions 279 to 282 (DEVH) match the DEAH box motif. The Helicase C-terminal domain maps to 368–536 (SIDHKYPPEE…SLVLQMKSMS (169 aa)). The tract at residues 701 to 955 (QAAQVGDSYS…LRARWESALD (255 aa)) is negatively regulates interaction with UPF1. A disordered region spans residues 724 to 766 (LKRQHEEGAGRRRKVLRLQEEQDGGSSDEDRAGPAPPGASDGV). A phosphoserine mark is found at Ser-749 and Ser-750. Residues 810 to 1143 (PQLAVPDAFN…EVLRHRKQHV (334 aa)) form a required for phosphorylation of UPF1. Not required for interaction with UPF1 region. A required for the interaction with SMG1 and subsequent phosphorylation of UPF1 region spans residues 957–1143 (QLAHQAQQQL…EVLRHRKQHV (187 aa)).

It belongs to the DEAD box helicase family. DEAH subfamily. Forms a complex with RUVBL1 and RUVBL2. Part of a complex composed of SMG1, DHX34 and UPF1; within the complex DHX34 acts as a scaffolding protein to facilitate SMG1 phosphorylation of UPF1. Interacts with UPF1, MOV10, EIF4A3, XRN2, SMG6, SMG7, SMG9, UPF3A, UPF3B, CASC3/MLN51, XRN1, DIS3 and DCP1A; the interactions are RNA-independent. Interacts with NCBP1/CPB80; the interaction is RNA-dependent. Interacts (via C-terminus) with SMG1; the interaction is RNA-independent. Expressed in whole blood, testis and spleen. Also expressed in the brain.

It catalyses the reaction ATP + H2O = ADP + phosphate + H(+). Its function is as follows. Probable ATP-binding RNA helicase required for nonsense-mediated decay (NMD) degradation of mRNA transcripts containing premature stop codons. Promotes the phosphorylation of UPF1 along with its interaction with key NMD pathway proteins UPF2 and EIF4A3. Interaction with the RUVBL1-RUVBL2 complex results in loss of nucleotide binding ability and ATP hydrolysis of the complex. Negatively regulates the nucleotide binding ability and ATP hydrolysis of the RUVBL1-RUVBL2 complex via induction of N-terminus conformation changes of the RUVBL2 subunits. The protein is Probable ATP-dependent RNA helicase DHX34 of Homo sapiens (Human).